Consider the following 277-residue polypeptide: MEAAETEAEAAALEVLAEVAGILEPVGLQEEAELPAKILVEFVVDSQKKDKLLCSQLQVADFLQNILAQEDTAKGLDPLASEDTSRQKAIAAKEQWKELKATYREHVEAIKIGLTKALTQMEEAQRKRTQLREAFEQLQAKKQMAMEKRRAVQNQWQLQQEKHLQHLAEVSAEVRERKTGTQQELDRVFQKLGNLKQQAEQERDKLQRYQTFLQLLYTLQGKLLFPEAEAEAENLPDDKPQQPTRPQEQSTGDTMGRDPGVSFKAVGLQPAGDVNLP.

The interaction with NDC80 and ZW10 stretch occupies residues 80-155 (ASEDTSRQKA…MEKRRAVQNQ (76 aa)). A coiled-coil region spans residues 104–217 (REHVEAIKIG…RYQTFLQLLY (114 aa)). Residues 228–277 (AEAEAENLPDDKPQQPTRPQEQSTGDTMGRDPGVSFKAVGLQPAGDVNLP) are disordered. A compositionally biased stretch (polar residues) spans 241–253 (QQPTRPQEQSTGD).

Component of the KNL1 complex composed of KNL1 and ZWINT. Part of the ten-subunit outer kinetochore KMN network that includes the KNL1, MIS12 and NDC80 complexes; a bioriented kinetochore contains approximately 150 copies of the network. Interacts with the MIS12 complex subunits MIS12 DSN1, and PMF1. Interacts with the NDC80 complex subunit NDC80 during mitosis. Interacts with ZW10. Interacts with CETN3.

It localises to the nucleus. Its subcellular location is the chromosome. The protein localises to the centromere. It is found in the kinetochore. Functionally, acts as a component of the outer kinetochore KNL1 complex that serves as a docking point for spindle assembly checkpoint components and mediates microtubule-kinetochore interactions. Kinetochores, consisting of a centromere-associated inner segment and a microtubule-contacting outer segment, play a crucial role in chromosome segregation by mediating the physical connection between centromeric DNA and spindle microtubules. The outer kinetochore is made up of the ten-subunit KMN network, comprising the MIS12, NDC80 and KNL1 complexes, and auxiliary microtubule-associated components; together they connect the outer kinetochore with the inner kinetochore, bind microtubules, and mediate interactions with mitotic checkpoint proteins that delay anaphase until chromosomes are bioriented on the spindle. Targets the RZZ complex to the kinetochore at prometaphase. Recruits MAD2L1 to the kinetochore, but is not required for BUB1B localization. In addition to orienting mitotic chromosomes, it is also essential for alignment of homologous chromosomes during meiotic metaphase I. In meiosis I, required to activate the spindle assembly checkpoint at unattached kinetochores to correct erroneous kinetochore-microtubule attachments. In Homo sapiens (Human), this protein is Outer kinetochore KNL1 complex subunit ZWINT (ZWINT).